We begin with the raw amino-acid sequence, 243 residues long: Venom protease (243 aa).

The Peptidase S1 domain maps to 1–243; the sequence is VVGGKPAKLG…DSFILPALKK (243 aa). A disulfide bridge links Cys34 with Cys50. Active-site charge relay system residues include His49 and Asp97. Cystine bridges form between Cys165-Cys178 and Cys189-Cys217. Ser193 functions as the Charge relay system in the catalytic mechanism.

Belongs to the peptidase S1 family. Expressed by the venom duct.

The protein resides in the secreted. In Bombus pensylvanicus (American bumblebee), this protein is Venom protease.